The chain runs to 135 residues: Large ribosomal subunit protein uL16c (135 aa).

Belongs to the universal ribosomal protein uL16 family. As to quaternary structure, part of the 50S ribosomal subunit.

The protein localises to the plastid. Its subcellular location is the chloroplast. The chain is Large ribosomal subunit protein uL16c from Lotus japonicus (Lotus corniculatus var. japonicus).